A 220-amino-acid polypeptide reads, in one-letter code: Ribosomal RNA large subunit methyltransferase E (220 aa).

Positions 60, 62, 92, 108, and 133 each coordinate S-adenosyl-L-methionine. Residue K173 is the Proton acceptor of the active site. The interval 197–220 (RKPKASRDKSSETFILGRQLKQPR) is disordered.

The protein belongs to the class I-like SAM-binding methyltransferase superfamily. RNA methyltransferase RlmE family.

The protein resides in the cytoplasm. The catalysed reaction is uridine(2552) in 23S rRNA + S-adenosyl-L-methionine = 2'-O-methyluridine(2552) in 23S rRNA + S-adenosyl-L-homocysteine + H(+). In terms of biological role, specifically methylates the uridine in position 2552 of 23S rRNA at the 2'-O position of the ribose in the fully assembled 50S ribosomal subunit. This is Ribosomal RNA large subunit methyltransferase E from Burkholderia ambifaria (strain MC40-6).